The chain runs to 159 residues: Succinate dehydrogenase [ubiquinone] cytochrome b small subunit, mitochondrial (159 aa).

The transit peptide at 1-56 (MAVLWRLSAVCGALGGRALLLRTPVVRPAHISAFLQDRPIPEWCGVQHIHLSPSHH) directs the protein to the mitochondrion. At 57-63 (SGSKAAS) the chain is on the mitochondrial matrix side. The helical transmembrane segment at 64 to 85 (LHWTSERVVSVLLLGLLPAAYL) threads the bilayer. At 86–90 (NPCSA) the chain is on the mitochondrial intermembrane side. Residues 91–111 (MDYSLAAALTLHGHWGLGQVV) traverse the membrane as a helical segment. His-102 serves as a coordination point for heme b. Over 112–122 (TDYVHGDALQK) the chain is Mitochondrial matrix. Position 114 (Tyr-114) interacts with a ubiquinone. The chain crosses the membrane as a helical span at residues 123–144 (AAKAGLLALSALTFAGLCYFNY). The Mitochondrial intermembrane segment spans residues 145–159 (HDVGICKAVAMLWKL).

Belongs to the CybS family. As to quaternary structure, component of complex II composed of four subunits: the flavoprotein (FP) SDHA, iron-sulfur protein (IP) SDHB, and a cytochrome b560 composed of SDHC and SDHD.

The protein resides in the mitochondrion inner membrane. It participates in carbohydrate metabolism; tricarboxylic acid cycle. Its function is as follows. Membrane-anchoring subunit of succinate dehydrogenase (SDH) that is involved in complex II of the mitochondrial electron transport chain and is responsible for transferring electrons from succinate to ubiquinone (coenzyme Q). SDH also oxidizes malate to the non-canonical enol form of oxaloacetate, enol-oxaloacetate. Enol-oxaloacetate, which is a potent inhibitor of the succinate dehydrogenase activity, is further isomerized into keto-oxaloacetate. The polypeptide is Succinate dehydrogenase [ubiquinone] cytochrome b small subunit, mitochondrial (SDHD) (Homo sapiens (Human)).